Consider the following 712-residue polypeptide: Elongation factor G (712 aa).

A tr-type G domain is found at 8 to 290; that stretch reads TRYRNIGISA…AVIEFLPSPT (283 aa). Residues 17-24, 88-92, and 142-145 each bind GTP; these read AHIDAGKT, DTPGH, and NKMD.

It belongs to the TRAFAC class translation factor GTPase superfamily. Classic translation factor GTPase family. EF-G/EF-2 subfamily.

It localises to the cytoplasm. In terms of biological role, catalyzes the GTP-dependent ribosomal translocation step during translation elongation. During this step, the ribosome changes from the pre-translocational (PRE) to the post-translocational (POST) state as the newly formed A-site-bound peptidyl-tRNA and P-site-bound deacylated tRNA move to the P and E sites, respectively. Catalyzes the coordinated movement of the two tRNA molecules, the mRNA and conformational changes in the ribosome. In Acinetobacter baumannii (strain SDF), this protein is Elongation factor G.